The primary structure comprises 798 residues: Metabotropic glutamate receptor-like protein A (798 aa).

The N-terminal stretch at M1–S23 is a signal peptide. Over L24 to L388 the chain is Extracellular. 3 N-linked (GlcNAc...) asparagine glycosylation sites follow: N186, N275, and N320. Residues T389–F409 form a helical membrane-spanning segment. Residues R410–S419 lie on the Cytoplasmic side of the membrane. Residues P420–F440 traverse the membrane as a helical segment. Topologically, residues S441–G447 are extracellular. The chain crosses the membrane as a helical span at residues I448 to L468. Residues V469–Y494 lie on the Cytoplasmic side of the membrane. The helical transmembrane segment at P495–G515 threads the bilayer. At D516 to V545 the chain is on the extracellular side. A helical transmembrane segment spans residues A546–F566. Topologically, residues K567 to K580 are cytoplasmic. A helical transmembrane segment spans residues P581 to V601. The Extracellular segment spans residues S602–Q609. Residues V610–G630 traverse the membrane as a helical segment. Over S631–V798 the chain is Cytoplasmic. A coiled-coil region spans residues A714–K771. Over residues E752–E774 the composition is skewed to basic and acidic residues. Positions E752–V798 are disordered.

In the N-terminal section; belongs to the BMP lipoprotein family. It in the C-terminal section; belongs to the G-protein coupled receptor 3 family. GABA-B receptor subfamily.

The protein localises to the membrane. It localises to the cytoplasm. Its subcellular location is the cell cortex. The protein resides in the perinuclear region. Its function is as follows. May play an important role in the terminal differentiation. The polypeptide is Metabotropic glutamate receptor-like protein A (grlA) (Dictyostelium discoideum (Social amoeba)).